The following is a 237-amino-acid chain: Lipid A 1-diphosphate synthase (237 aa).

At 1–5 (MIKNL) the chain is on the cytoplasmic side. The chain crosses the membrane as a helical span at residues 6-26 (PQIVLLNIVGLALFLSWYIPV). Residues 27–62 (NHGFWLPIDADIFYFFNQKLVESKAFLWLVALTNNR) are Periplasmic-facing. A helical transmembrane segment spans residues 63-83 (AFDGCSLLAMGMLMLSFWLKE). Residues 84–90 (NAPGRRR) are Cytoplasmic-facing. The helical transmembrane segment at 91-111 (IVIIGLVMLLTAVVLNQLGQA) threads the bilayer. Topologically, residues 112-145 (LIPVKRASPTLTFTDINRVSELLSVPTKDASRDS) are periplasmic. Residue Lys167 is a topological domain, cytoplasmic. The helical transmembrane segment at 168 to 188 (VAGLIALIIFVVFAFPRVMIG) threads the bilayer. Over 189-194 (AHWFTD) the chain is Periplasmic. Residues 195–215 (IIVGSMTVILIGLPWVLLTPL) traverse the membrane as a helical segment. The Cytoplasmic segment spans residues 216–237 (SDRLITFFDKSLPGKNKHFQNK).

This sequence belongs to the LpxT phosphotransferase family.

The protein resides in the cell inner membrane. It carries out the reaction di-trans,octa-cis-undecaprenyl diphosphate + alpha-Kdo-(2-&gt;4)-alpha-Kdo-(2-&gt;6)-lipid A (E. coli) = (Kdo)2-lipid A 1-diphosphate + di-trans,octa-cis-undecaprenyl phosphate. The protein operates within bacterial outer membrane biogenesis; lipopolysaccharide biosynthesis. Inhibited by BasR. This regulation does not occur at the level of transcription, but rather following the assembly of LpxT into the inner membrane. Its function is as follows. Involved in the modification of the lipid A domain of lipopolysaccharides (LPS). Transfers a phosphate group from undecaprenyl pyrophosphate (C55-PP) to lipid A to form lipid A 1-diphosphate. Contributes to the recycling of undecaprenyl phosphate (C55-P). In vitro, has low undecaprenyl-diphosphate phosphatase activity. This is Lipid A 1-diphosphate synthase from Escherichia coli (strain K12).